We begin with the raw amino-acid sequence, 933 residues long: Protein translocase subunit SecA (933 aa).

ATP contacts are provided by residues Gln-87, 105 to 109, and Asp-515; that span reads GEGKT. Disordered stretches follow at residues 567–588, 840–861, and 880–933; these read ESRR…PGSS, DVEA…RHAA, and AAAE…CGKL. Positions 845–856 are enriched in basic and acidic residues; it reads EEQRRQEAERMQ. The segment covering 880–897 has biased composition (low complexity); that stretch reads AAAEGDSAPTGGAQQQSA. Positions 905–914 are enriched in basic and acidic residues; it reads VAREGPKVGR. Zn(2+) is bound by residues Cys-918, Cys-920, Cys-929, and Cys-930. Residues 924–933 show a composition bias toward basic residues; that stretch reads KKYKHCCGKL.

This sequence belongs to the SecA family. As to quaternary structure, monomer and homodimer. Part of the essential Sec protein translocation apparatus which comprises SecA, SecYEG and auxiliary proteins SecDF-YajC and YidC. Zn(2+) serves as cofactor.

It is found in the cell inner membrane. It localises to the cytoplasm. The catalysed reaction is ATP + H2O + cellular proteinSide 1 = ADP + phosphate + cellular proteinSide 2.. Part of the Sec protein translocase complex. Interacts with the SecYEG preprotein conducting channel. Has a central role in coupling the hydrolysis of ATP to the transfer of proteins into and across the cell membrane, serving both as a receptor for the preprotein-SecB complex and as an ATP-driven molecular motor driving the stepwise translocation of polypeptide chains across the membrane. This is Protein translocase subunit SecA from Halorhodospira halophila (strain DSM 244 / SL1) (Ectothiorhodospira halophila (strain DSM 244 / SL1)).